The sequence spans 112 residues: Large ribosomal subunit protein uL24 (112 aa).

The protein belongs to the universal ribosomal protein uL24 family. In terms of assembly, part of the 50S ribosomal subunit.

One of two assembly initiator proteins, it binds directly to the 5'-end of the 23S rRNA, where it nucleates assembly of the 50S subunit. Functionally, one of the proteins that surrounds the polypeptide exit tunnel on the outside of the subunit. The sequence is that of Large ribosomal subunit protein uL24 from Desulfitobacterium hafniense (strain Y51).